The following is an 83-amino-acid chain: Aminoacyl carrier protein (83 aa).

A Carrier domain is found at 1-80; it reads MNATIREILA…DTVKLILDGK (80 aa). An O-(pantetheine 4'-phosphoryl)serine modification is found at Ser-35.

Post-translationally, 4'-phosphopantetheine is transferred from CoA to a specific serine of the apo-form of this carrier protein.

Aminoacyl carrier protein. Can be charged with L-alanine, L-glycine or L-serine, via the formation of a thioester bond between the amino acid and the 4'-phosphopantetheinyl prosthetic group, catalyzed by the Atu2573 ligase. The polypeptide is Aminoacyl carrier protein (Agrobacterium fabrum (strain C58 / ATCC 33970) (Agrobacterium tumefaciens (strain C58))).